Reading from the N-terminus, the 295-residue chain is MGVRKLKPVTNGTRHAVLYDFEEIEKLVRKGKELVLVKKNKVEPEKSLLKWWHRAKGRSRQRGNITARHRGGGHKKLYRIIDFERDKSLVPAKVVSIEYDPFRSARICLLHYADGEKRYIIWPEGLKVGDTVMSISWEDAEAGKPLPEIKPGNAMPLKYIPEGTIIHNIEFMPGKGGQIARAAGTWAQVLGRSTKKGYVLVRMPSGEVRMIHERCMATIGRVGLAEHELVNVGKAGRARWLGWRPHTRGTAMNPVDHPHGGGEGRTRGKHPESPWDGRRRDTRREGVRSTPISLS.

The interval 243–295 (WRPHTRGTAMNPVDHPHGGGEGRTRGKHPESPWDGRRRDTRREGVRSTPISLS) is disordered. Residues 256–287 (DHPHGGGEGRTRGKHPESPWDGRRRDTRREGV) show a composition bias toward basic and acidic residues.

Belongs to the universal ribosomal protein uL2 family. Part of the 50S ribosomal subunit. Forms a bridge to the 30S subunit in the 70S ribosome.

One of the primary rRNA binding proteins. Required for association of the 30S and 50S subunits to form the 70S ribosome, for tRNA binding and peptide bond formation. It has been suggested to have peptidyltransferase activity; this is somewhat controversial. Makes several contacts with the 16S rRNA in the 70S ribosome. This is Large ribosomal subunit protein uL2 from Aquifex pyrophilus.